The following is a 296-amino-acid chain: 5,10-methylenetetrahydrofolate reductase (296 aa).

The Proton donor/acceptor role is filled by E28. T59 serves as a coordination point for NADH. FAD is bound by residues Y60, A62, H88, R118, G119, D120, A132, Y152, H156, A159, D165, N168, R171, and K172. D120 contributes to the (6S)-5-methyl-5,6,7,8-tetrahydrofolate binding site. Q183 provides a ligand contact to NADH. (6S)-5-methyl-5,6,7,8-tetrahydrofolate-binding residues include Q183, Q219, and R279.

This sequence belongs to the methylenetetrahydrofolate reductase family. The cofactor is FAD.

The catalysed reaction is (6S)-5-methyl-5,6,7,8-tetrahydrofolate + NAD(+) = (6R)-5,10-methylene-5,6,7,8-tetrahydrofolate + NADH + H(+). It functions in the pathway one-carbon metabolism; tetrahydrofolate interconversion. Its pathway is amino-acid biosynthesis; L-methionine biosynthesis via de novo pathway. Catalyzes the NADH-dependent reduction of 5,10-methylenetetrahydrofolate to 5-methyltetrahydrofolate. Is required to provide the methyl group necessary for methionine synthetase to convert homocysteine to methionine; the methyl group is given by 5-methyltetrahydrofolate. The polypeptide is 5,10-methylenetetrahydrofolate reductase (metF) (Salmonella typhimurium (strain LT2 / SGSC1412 / ATCC 700720)).